The following is a 293-amino-acid chain: DDRGK domain-containing protein 1 (293 aa).

The Lumenal portion of the chain corresponds to 1-6 (MWGPLI). A helical transmembrane segment spans residues 7 to 27 (YALLGLAIVAAAFLFVRRSQA). The Cytoplasmic portion of the chain corresponds to 28-293 (KEVVPVADDD…PADVDETTTA (266 aa)). 2 disordered regions span residues 30-151 (VVPV…RQKE) and 273-293 (TDVEFPGDEPAPADVDETTTA). Composition is skewed to basic and acidic residues over residues 90–126 (KLQEKEERRRRNEEMAQAREQAKLLQHQEEEERKERE) and 133–151 (ERQREAELEREREAQRQKE).

Belongs to the DDRGK1 family.

It is found in the endoplasmic reticulum membrane. In terms of biological role, substrate adapter for ufmylation, the covalent attachment of the ubiquitin-like modifier UFM1 to substrate proteins. This chain is DDRGK domain-containing protein 1, found in Monosiga brevicollis (Choanoflagellate).